The sequence spans 96 residues: MLFHVKMTVKLPVDMDPAKATQLKADEKELAQRLQREGTWRHLWRIAGHYANYSVFDVSSVEACNDTLMQLPLFPYMDIEVDGLCRHPSSIHSDDR.

The protein belongs to the muconolactone Delta-isomerase family. In terms of assembly, homodecamer.

The catalysed reaction is (S)-muconolactone = (4,5-dihydro-5-oxofuran-2-yl)-acetate. It participates in aromatic compound metabolism; beta-ketoadipate pathway; 5-oxo-4,5-dihydro-2-furylacetate from catechol: step 3/3. The protein is Muconolactone Delta-isomerase (catC) of Pseudomonas putida (Arthrobacter siderocapsulatus).